The chain runs to 468 residues: UDP-N-acetylmuramate--L-alanine ligase (468 aa).

112-118 (GTHGKTT) serves as a coordination point for ATP.

Belongs to the MurCDEF family.

It localises to the cytoplasm. It carries out the reaction UDP-N-acetyl-alpha-D-muramate + L-alanine + ATP = UDP-N-acetyl-alpha-D-muramoyl-L-alanine + ADP + phosphate + H(+). Its pathway is cell wall biogenesis; peptidoglycan biosynthesis. In terms of biological role, cell wall formation. This Bordetella avium (strain 197N) protein is UDP-N-acetylmuramate--L-alanine ligase.